Here is a 173-residue protein sequence, read N- to C-terminus: ATP synthase subunit delta (173 aa).

It belongs to the ATPase delta chain family. In terms of assembly, F-type ATPases have 2 components, F(1) - the catalytic core - and F(0) - the membrane proton channel. F(1) has five subunits: alpha(3), beta(3), gamma(1), delta(1), epsilon(1). F(0) has three main subunits: a(1), b(2) and c(10-14). The alpha and beta chains form an alternating ring which encloses part of the gamma chain. F(1) is attached to F(0) by a central stalk formed by the gamma and epsilon chains, while a peripheral stalk is formed by the delta and b chains.

The protein resides in the cell inner membrane. Its function is as follows. F(1)F(0) ATP synthase produces ATP from ADP in the presence of a proton or sodium gradient. F-type ATPases consist of two structural domains, F(1) containing the extramembraneous catalytic core and F(0) containing the membrane proton channel, linked together by a central stalk and a peripheral stalk. During catalysis, ATP synthesis in the catalytic domain of F(1) is coupled via a rotary mechanism of the central stalk subunits to proton translocation. Functionally, this protein is part of the stalk that links CF(0) to CF(1). It either transmits conformational changes from CF(0) to CF(1) or is implicated in proton conduction. The sequence is that of ATP synthase subunit delta from Campylobacter jejuni subsp. jejuni serotype O:2 (strain ATCC 700819 / NCTC 11168).